The following is a 269-amino-acid chain: Protein MGF 360-15R (269 aa).

Belongs to the asfivirus MGF 360 family.

Functionally, plays a role in virus cell tropism, and may be required for efficient virus replication in macrophages. The polypeptide is Protein MGF 360-15R (African swine fever virus (isolate Pig/Kenya/KEN-50/1950) (ASFV)).